A 306-amino-acid polypeptide reads, in one-letter code: Glutathione transport system permease protein GsiC (306 aa).

The Cytoplasmic segment spans residues 1–8 (MLNYVIKR). Residues 9-29 (LLGLIPTLFIVSVLVFLFVHM) form a helical membrane-spanning segment. The Periplasmic portion of the chain corresponds to 30 to 102 (LPGDPARLIA…SRFMPTLWLT (73 aa)). One can recognise an ABC transmembrane type-1 domain in the interval 95 to 292 (FMPTLWLTIT…LEFILINLVV (198 aa)). The helical transmembrane segment at 103–123 (ITSMVWAVIFGMAAGIIAAVW) threads the bilayer. At 124–134 (RNRWPDRLSMT) the chain is on the cytoplasmic side. The helical transmembrane segment at 135–155 (IAVSGISFPAFALGMFLIQVF) threads the bilayer. Residues 156–168 (SVELGWLPTVGAD) are Periplasmic-facing. A helical membrane pass occupies residues 169-189 (SWQHYILPSLTLGAAVAAVMA). Topologically, residues 190–228 (RFTRASFVDVLSEDYMRTARAKGVSETWVVLKHGLRNAM) are cytoplasmic. A helical membrane pass occupies residues 229–249 (IPVVTMMGLQFGFLLGGSIVV). At 250–277 (EKVFNWPGLGRLLVDSVEMRDYPVIQAE) the chain is on the periplasmic side. A helical transmembrane segment spans residues 278 to 298 (ILLFSLEFILINLVVDVLYAA). Residues 299-306 (INPAIRYK) are Cytoplasmic-facing.

This sequence belongs to the binding-protein-dependent transport system permease family. As to quaternary structure, the complex is composed of two ATP-binding proteins (GsiA), two transmembrane proteins (GsiC and GsiD) and a solute-binding protein (GsiB).

It is found in the cell inner membrane. Functionally, part of the ABC transporter complex GsiABCD involved in glutathione import. Probably responsible for the translocation of the substrate across the membrane. The protein is Glutathione transport system permease protein GsiC of Shigella flexneri serotype 5b (strain 8401).